Reading from the N-terminus, the 222-residue chain is Pleckstrin homology domain-containing family B member 2 (222 aa).

Positions 2 to 109 (AFVKSGWLLR…WKFTLQDSRT (108 aa)) constitute a PH domain. Lysine 20 provides a ligand contact to a 1,2-diacyl-sn-glycero-3-phospho-L-serine.

The protein localises to the recycling endosome membrane. Involved in retrograde transport of recycling endosomes. This chain is Pleckstrin homology domain-containing family B member 2 (PLEKHB2), found in Pongo abelii (Sumatran orangutan).